The sequence spans 184 residues: Photosystem I assembly protein Ycf4 (184 aa).

Helical transmembrane passes span 22-42 (FCWAFILFLGSLGFLLVGTSS) and 57-77 (IIFFPQGIVMSFYGIAGLFIS).

It belongs to the Ycf4 family.

The protein resides in the plastid. Its subcellular location is the chloroplast thylakoid membrane. Functionally, seems to be required for the assembly of the photosystem I complex. This chain is Photosystem I assembly protein Ycf4, found in Arabis hirsuta (Hairy rock-cress).